A 92-amino-acid chain; its full sequence is Small ribosomal subunit protein uS19c (92 aa).

It belongs to the universal ribosomal protein uS19 family.

The protein localises to the plastid. Its subcellular location is the chloroplast. Protein S19 forms a complex with S13 that binds strongly to the 16S ribosomal RNA. This Ostreococcus tauri protein is Small ribosomal subunit protein uS19c.